Consider the following 163-residue polypeptide: Nucleotide-binding protein Cj0374 (163 aa).

Belongs to the YajQ family.

In terms of biological role, nucleotide-binding protein. This is Nucleotide-binding protein Cj0374 from Campylobacter jejuni subsp. jejuni serotype O:2 (strain ATCC 700819 / NCTC 11168).